Consider the following 245-residue polypeptide: 5'-nucleotidase SurE (245 aa).

Residues Asp-8, Asp-9, Ser-39, and Asn-91 each coordinate a divalent metal cation.

This sequence belongs to the SurE nucleotidase family. Requires a divalent metal cation as cofactor.

Its subcellular location is the cytoplasm. The catalysed reaction is a ribonucleoside 5'-phosphate + H2O = a ribonucleoside + phosphate. In terms of biological role, nucleotidase that shows phosphatase activity on nucleoside 5'-monophosphates. The protein is 5'-nucleotidase SurE of Psychromonas ingrahamii (strain DSM 17664 / CCUG 51855 / 37).